Reading from the N-terminus, the 405-residue chain is S-adenosylmethionine synthase (405 aa).

Residue His19 coordinates ATP. Asp21 contributes to the Mg(2+) binding site. K(+) is bound at residue Glu47. Positions 60 and 103 each coordinate L-methionine. Positions 103–113 are flexible loop; it reads QSADIAQGVDK. Residues 179 to 181, 246 to 247, Asp255, 261 to 262, Ala278, and Lys282 contribute to the ATP site; these read DGK, RF, and RK. Asp255 lines the L-methionine pocket. Lys286 contacts L-methionine.

The protein belongs to the AdoMet synthase family. As to quaternary structure, homotetramer; dimer of dimers. Requires Mg(2+) as cofactor. K(+) serves as cofactor.

It is found in the cytoplasm. It catalyses the reaction L-methionine + ATP + H2O = S-adenosyl-L-methionine + phosphate + diphosphate. The protein operates within amino-acid biosynthesis; S-adenosyl-L-methionine biosynthesis; S-adenosyl-L-methionine from L-methionine: step 1/1. Its function is as follows. Catalyzes the formation of S-adenosylmethionine (AdoMet) from methionine and ATP. The overall synthetic reaction is composed of two sequential steps, AdoMet formation and the subsequent tripolyphosphate hydrolysis which occurs prior to release of AdoMet from the enzyme. The sequence is that of S-adenosylmethionine synthase from Shouchella clausii (strain KSM-K16) (Alkalihalobacillus clausii).